Reading from the N-terminus, the 122-residue chain is MLTKPDRKAIRAKRRRRVRNKILGTAARPRLNVFRSLNNMYAQLIDDETGVTVVAASTLSPELKETFKNGGNVEAAKAVGDLVGKLALEKGIKEVVFDRAGYLYHGRVKALAEAAREAGLDF.

It belongs to the universal ribosomal protein uL18 family. Part of the 50S ribosomal subunit; part of the 5S rRNA/L5/L18/L25 subcomplex. Contacts the 5S and 23S rRNAs.

Its function is as follows. This is one of the proteins that bind and probably mediate the attachment of the 5S RNA into the large ribosomal subunit, where it forms part of the central protuberance. The protein is Large ribosomal subunit protein uL18 of Desulforamulus reducens (strain ATCC BAA-1160 / DSM 100696 / MI-1) (Desulfotomaculum reducens).